A 790-amino-acid chain; its full sequence is Cadherin-20 (790 aa).

The signal sequence occupies residues 1–25 (MSCKRSYHRHCALVYYMVLLDLTNA). The propeptide occupies 26–52 (VFEFSHPLIRDSGNSQSRQLLHHRLKR). Residues 26 to 612 (VFEFSHPLIR…PYTLPISLSR (587 aa)) are Extracellular-facing. Cadherin domains follow at residues 54–158 (WVWN…EPKF), 159–267 (LDGP…PPRF), 268–382 (PQKH…PPVF), 383–487 (GSSF…APTF), and 487–605 (FTKF…EPYT). 5 N-linked (GlcNAc...) asparagine glycosylation sites follow: Asn-254, Asn-283, Asn-413, Asn-454, and Asn-535. Residues 613–633 (GALIAILTCIFVLLVLVLLIL) form a helical membrane-spanning segment. The Cytoplasmic portion of the chain corresponds to 634 to 790 (SMRRHRKQPY…YGTKDNNGSL (157 aa)).

In terms of tissue distribution, detected in embryonic posterior neural plate, embryonic neural tube, sulcus limitans and embryonic kidney.

The protein localises to the cell membrane. Functionally, cadherins are calcium-dependent cell adhesion proteins. They preferentially interact with themselves in a homophilic manner in connecting cells; cadherins may thus contribute to the sorting of heterogeneous cell types. The sequence is that of Cadherin-20 (cdh20) from Xenopus laevis (African clawed frog).